A 418-amino-acid polypeptide reads, in one-letter code: Putative competence-damage inducible protein (418 aa).

Belongs to the CinA family.

The protein is Putative competence-damage inducible protein of Streptococcus pneumoniae serotype 2 (strain D39 / NCTC 7466).